Here is a 436-residue protein sequence, read N- to C-terminus: Protein translocase subunit SecY (436 aa).

10 helical membrane-spanning segments follow: residues I19 to G39, F68 to L88, Y116 to L136, L151 to I171, G179 to I199, I216 to V236, V269 to L289, G313 to I333, V372 to G392, and D395 to M415.

It belongs to the SecY/SEC61-alpha family. In terms of assembly, component of the Sec protein translocase complex. Heterotrimer consisting of SecY, SecE and SecG subunits. The heterotrimers can form oligomers, although 1 heterotrimer is thought to be able to translocate proteins. Interacts with the ribosome. Interacts with SecDF, and other proteins may be involved. Interacts with SecA.

It localises to the cell membrane. In terms of biological role, the central subunit of the protein translocation channel SecYEG. Consists of two halves formed by TMs 1-5 and 6-10. These two domains form a lateral gate at the front which open onto the bilayer between TMs 2 and 7, and are clamped together by SecE at the back. The channel is closed by both a pore ring composed of hydrophobic SecY resides and a short helix (helix 2A) on the extracellular side of the membrane which forms a plug. The plug probably moves laterally to allow the channel to open. The ring and the pore may move independently. The sequence is that of Protein translocase subunit SecY from Streptococcus gordonii (strain Challis / ATCC 35105 / BCRC 15272 / CH1 / DL1 / V288).